We begin with the raw amino-acid sequence, 113 residues long: Nucleoid-associated protein Synpcc7942_0464 (113 aa).

The protein belongs to the YbaB/EbfC family. In terms of assembly, homodimer.

It is found in the cytoplasm. It localises to the nucleoid. In terms of biological role, binds to DNA and alters its conformation. May be involved in regulation of gene expression, nucleoid organization and DNA protection. The sequence is that of Nucleoid-associated protein Synpcc7942_0464 from Synechococcus elongatus (strain ATCC 33912 / PCC 7942 / FACHB-805) (Anacystis nidulans R2).